Consider the following 149-residue polypeptide: MSKSLSFKTYSAKPGEVERSWYVIDADGQVLGRMAAEIARVLRGKHKPQFTPHIDTGDFIVVTNAAKIGLSGKKTEQKSYFSHSNYPGGVKFDHVKDLLKKKPEKIIEHAVWGMLPHNNLGRQLFKKLKVYAGPEHPHASQNPVEMKVN.

Belongs to the universal ribosomal protein uL13 family. In terms of assembly, part of the 50S ribosomal subunit.

In terms of biological role, this protein is one of the early assembly proteins of the 50S ribosomal subunit, although it is not seen to bind rRNA by itself. It is important during the early stages of 50S assembly. In Chlorobium phaeobacteroides (strain DSM 266 / SMG 266 / 2430), this protein is Large ribosomal subunit protein uL13.